Here is a 793-residue protein sequence, read N- to C-terminus: Protein smoothened (793 aa).

The first 32 residues, 1–32 (MAAGRPVRGPELAPRRLLQLLLLVLLGGPGRG), serve as a signal peptide directing secretion. Topologically, residues 33 to 237 (AALSGNVTGP…EAEHQDMHSY (205 aa)) are extracellular. The interval 35–61 (LSGNVTGPGPHSASGSSRRDVPVTSPP) is disordered. N-linked (GlcNAc...) asparagine glycosylation is present at N38. Intrachain disulfides connect C68/C182, C74/C138, C82/C131, C122/C158, and C151/C173. The FZ domain maps to 69–185 (GRAAHCEPLR…DHFPEGCPNE (117 aa)). D99 provides a ligand contact to cholesterol. N-linked (GlcNAc...) asparagine glycosylation occurs at N192. Disulfide bonds link C197–C217, C221–C299, and C318–C394. A helical transmembrane segment spans residues 238–258 (IAAFGAVTGLCTLFTLATFVA). Topologically, residues 259 to 265 (DWRNSNR) are cytoplasmic. A helical membrane pass occupies residues 266 to 286 (YPAVILFYVNACFFVGSIGWL). Residues 287-318 (AQFMDGARREIVCRADGTMRFGEPTSSETLSC) lie on the Extracellular side of the membrane. Residues 319 to 339 (VIIFVIVYYALMAGVVWFVVL) traverse the membrane as a helical segment. Residues 340–362 (TYAWHTSFKALGTTYQPLSGKTS) lie on the Cytoplasmic side of the membrane. A helical membrane pass occupies residues 363–383 (YFHLLTWSLPFVLTVAILAVA). At 384–406 (QVDGDSVSGICFVGYKNYRYRAG) the chain is on the extracellular side. Y398 provides a ligand contact to cholesterol. The helical transmembrane segment at 407-427 (FVLAPIGLVLIVGGYFLIRGV) threads the bilayer. The Cytoplasmic segment spans residues 428–455 (MTLFSIKSNHPGLLSEKAASKINETMLR). The helical transmembrane segment at 456-476 (LGIFGFLAFGFVLITFSCHFY) threads the bilayer. Topologically, residues 477–528 (DFFNQAEWERSFRDYVLCQANVTIGLPTKKPIPDCEIKNRPSLLVEKINLFA) are extracellular. An intrachain disulfide couples C494 to C511. N-linked (GlcNAc...) asparagine glycosylation occurs at N497. The helical transmembrane segment at 529–549 (MFGTGIAMSTWVWTKATLLIW) threads the bilayer. Positions 542-573 (TKATLLIWRRTWCRLTGHSDDEPKRIKKSKMI) are interaction with BBS5 and BBS7. The Cytoplasmic portion of the chain corresponds to 550–793 (RRTWCRLTGH…AEILDADSDF (244 aa)). Phosphoserine occurs at positions 560, 578, and 594. The required for interaction with PRKACA stretch occupies residues 574–657 (AKAFSKRREL…TPVPPEEQAN (84 aa)). The interval 585–597 (QNPGQELSFSMHT) is interaction with DLG5. Position 597 is a phosphothreonine (T597). 2 positions are modified to phosphoserine: S599 and S642. Phosphothreonine occurs at positions 644 and 648. A Phosphoserine modification is found at S666. A compositionally biased stretch (basic residues) spans 674–684 (GRKKKRRKRKK). The interval 674-703 (GRKKKRRKRKKEVCPLRPAPELHHSAPVPA) is disordered.

The protein belongs to the G-protein coupled receptor Fz/Smo family. As to quaternary structure, homodimer. Interacts (via C-terminus) with protein kinase A catalytic subunit PRKACA; interacts with free PRKACA subunits and the interaction leads to sequestration of PRKACA at the membrane, preventing PRKACA-mediated phosphorylation of GLI transcription factors. Interacts with ARRB2. Interacts with BBS5 and BBS7; the interactions are indicative for the association of SMO with the BBsome complex to facilitate ciliary localization of SMO. Interacts with KIF7, DLG5 and SDCBP. Interacts with GAS8/DRC4. Phosphorylation by GRK kinases is required for interaction with protein kinase A catalytic subunit PRKACA. In terms of tissue distribution, during early somite stages of embryonic development, modestly up-regulated in the cells of the node (at protein level).

It is found in the cell membrane. It localises to the cell projection. The protein resides in the cilium. In terms of biological role, g protein-coupled receptor which associates with the patched protein (PTCH) to transduce hedgehog protein signaling. Binding of sonic hedgehog (SHH) to its receptor patched prevents inhibition of smoothened (SMO) by patched. When active, SMO binds to and sequesters protein kinase A catalytic subunit PRKACA at the cell membrane, preventing PRKACA-mediated phosphorylation of GLI transcription factors which releases the GLI proteins from PRKACA-mediated inhibition and allows for transcriptional activation of hedgehog pathway target genes. Required for the accumulation of KIF7, GLI2 and GLI3 in the cilia. Interacts with DLG5 at the ciliary base to induce the accumulation of KIF7 and GLI2 at the ciliary tip for GLI2 activation. The protein is Protein smoothened (Smo) of Mus musculus (Mouse).